Reading from the N-terminus, the 241-residue chain is Small ribosomal subunit protein uS2 (241 aa).

This sequence belongs to the universal ribosomal protein uS2 family.

The chain is Small ribosomal subunit protein uS2 from Cronobacter sakazakii (strain ATCC BAA-894) (Enterobacter sakazakii).